The primary structure comprises 371 residues: tRNA-specific 2-thiouridylase MnmA (371 aa).

ATP contacts are provided by residues 13-20 and methionine 39; that span reads GMSGGVDS. The interval 99–101 is interaction with target base in tRNA; the sequence is NPD. Catalysis depends on cysteine 104, which acts as the Nucleophile. Cysteine 104 and cysteine 200 are joined by a disulfide. Glycine 128 is an ATP binding site. The segment at 150–152 is interaction with tRNA; that stretch reads KDQ. Cysteine 200 functions as the Cysteine persulfide intermediate in the catalytic mechanism. Residues 308 to 309 are interaction with tRNA; sequence RY.

This sequence belongs to the MnmA/TRMU family.

It is found in the cytoplasm. It carries out the reaction S-sulfanyl-L-cysteinyl-[protein] + uridine(34) in tRNA + AH2 + ATP = 2-thiouridine(34) in tRNA + L-cysteinyl-[protein] + A + AMP + diphosphate + H(+). Catalyzes the 2-thiolation of uridine at the wobble position (U34) of tRNA, leading to the formation of s(2)U34. This is tRNA-specific 2-thiouridylase MnmA from Geobacillus thermodenitrificans (strain NG80-2).